The following is a 552-amino-acid chain: 5'-AMP-activated protein kinase catalytic subunit alpha-2 (552 aa).

The region spanning Tyr16–Phe268 is the Protein kinase domain. Residues Leu22–Val30 and Lys45 contribute to the ATP site. The active-site Proton acceptor is Asp139. Thr172 carries the phosphothreonine; by LKB1 and CaMKK2 modification. Thr258 carries the post-translational modification Phosphothreonine. The segment at Glu291 to Asp376 is AIS. Residue Ser377 is modified to Phosphoserine. The tract at residues Glu478–Ser519 is disordered. Residues Arg480–Cys490 show a composition bias toward polar residues. A Phosphoserine modification is found at Ser491. Residues Ser509 to Ser519 are compositionally biased toward low complexity.

It belongs to the protein kinase superfamily. CAMK Ser/Thr protein kinase family. SNF1 subfamily. As to quaternary structure, AMPK is a heterotrimer of an alpha catalytic subunit (PRKAA1 or PRKAA2), a beta (PRKAB1 or PRKAB2) and a gamma non-catalytic subunits (PRKAG1, PRKAG2 or PRKAG3). Interacts with FNIP1 and FNIP2. Interacts with DUSP29. Interacts with ARF6. The phosphorylated form at Thr-172 mediated by CamKK2 interacts with ACSS2. Mg(2+) is required as a cofactor. In terms of processing, ubiquitinated. Post-translationally, phosphorylated at Thr-172 by STK11/LKB1 in complex with STE20-related adapter-alpha (STRADA) pseudo kinase and CAB39. Also phosphorylated at Thr-172 by CAMKK2; triggered by a rise in intracellular calcium ions, without detectable changes in the AMP/ATP ratio. CAMKK1 can also phosphorylate Thr-172, but at much lower level. Dephosphorylated by protein phosphatase 2A and 2C (PP2A and PP2C). Phosphorylated by ULK1; leading to negatively regulate AMPK activity and suggesting the existence of a regulatory feedback loop between ULK1 and AMPK. Dephosphorylated by PPM1A and PPM1B at Thr-172 (mediated by STK11/LKB1).

It localises to the cytoplasm. The protein localises to the nucleus. The catalysed reaction is L-seryl-[protein] + ATP = O-phospho-L-seryl-[protein] + ADP + H(+). It carries out the reaction L-threonyl-[protein] + ATP = O-phospho-L-threonyl-[protein] + ADP + H(+). The enzyme catalyses L-seryl-[acetyl-CoA carboxylase] + ATP = O-phospho-L-seryl-[acetyl-CoA carboxylase] + ADP + H(+). It catalyses the reaction L-seryl-[3-hydroxy-3-methylglutaryl-coenzyme A reductase] + ATP = O-phospho-L-seryl-[3-hydroxy-3-methylglutaryl-coenzyme A reductase] + ADP + H(+). Activated by phosphorylation on Thr-172. Binding of AMP to non-catalytic gamma subunit (PRKAG1, PRKAG2 or PRKAG3) results in allosteric activation, inducing phosphorylation on Thr-172. AMP-binding to gamma subunit also sustains activity by preventing dephosphorylation of Thr-172. ADP also stimulates Thr-172 phosphorylation, without stimulating already phosphorylated AMPK. ATP promotes dephosphorylation of Thr-172, rendering the enzyme inactive. Under physiological conditions AMPK mainly exists in its inactive form in complex with ATP, which is much more abundant than AMP. Selectively inhibited by compound C (6-[4-(2-Piperidin-1-yl-ethoxy)-phenyl)]-3-pyridin-4-yl-pyyrazolo[1,5-a] pyrimidine. Activated by resveratrol, a natural polyphenol present in red wine, and S17834, a synthetic polyphenol. Salicylate/aspirin directly activates kinase activity, primarily by inhibiting Thr-172 dephosphorylation. Catalytic subunit of AMP-activated protein kinase (AMPK), an energy sensor protein kinase that plays a key role in regulating cellular energy metabolism. In response to reduction of intracellular ATP levels, AMPK activates energy-producing pathways and inhibits energy-consuming processes: inhibits protein, carbohydrate and lipid biosynthesis, as well as cell growth and proliferation. AMPK acts via direct phosphorylation of metabolic enzymes, and by longer-term effects via phosphorylation of transcription regulators. Regulates lipid synthesis by phosphorylating and inactivating lipid metabolic enzymes such as ACACA, ACACB, GYS1, HMGCR and LIPE; regulates fatty acid and cholesterol synthesis by phosphorylating acetyl-CoA carboxylase (ACACA and ACACB) and hormone-sensitive lipase (LIPE) enzymes, respectively. Promotes lipolysis of lipid droplets by mediating phosphorylation of isoform 1 of CHKA (CHKalpha2). Regulates insulin-signaling and glycolysis by phosphorylating IRS1, PFKFB2 and PFKFB3. Involved in insulin receptor/INSR internalization. AMPK stimulates glucose uptake in muscle by increasing the translocation of the glucose transporter SLC2A4/GLUT4 to the plasma membrane, possibly by mediating phosphorylation of TBC1D4/AS160. Regulates transcription and chromatin structure by phosphorylating transcription regulators involved in energy metabolism such as CRTC2/TORC2, FOXO3, histone H2B, HDAC5, MEF2C, MLXIPL/ChREBP, EP300, HNF4A, p53/TP53, SREBF1, SREBF2 and PPARGC1A. Acts as a key regulator of glucose homeostasis in liver by phosphorylating CRTC2/TORC2, leading to CRTC2/TORC2 sequestration in the cytoplasm. In response to stress, phosphorylates 'Ser-36' of histone H2B (H2BS36ph), leading to promote transcription. Acts as a key regulator of cell growth and proliferation by phosphorylating FNIP1, TSC2, RPTOR, WDR24 and ATG1/ULK1: in response to nutrient limitation, negatively regulates the mTORC1 complex by phosphorylating RPTOR component of the mTORC1 complex and by phosphorylating and activating TSC2. Also phosphorylates and inhibits GATOR2 subunit WDR24 in response to nutrient limitation, leading to suppress glucose-mediated mTORC1 activation. In response to energetic stress, phosphorylates FNIP1, inactivating the non-canonical mTORC1 signaling, thereby promoting nuclear translocation of TFEB and TFE3, and inducing transcription of lysosomal or autophagy genes. In response to nutrient limitation, promotes autophagy by phosphorylating and activating ATG1/ULK1. In that process also activates WDR45/WIPI4. Phosphorylates CASP6, thereby preventing its autoprocessing and subsequent activation. AMPK also acts as a regulator of circadian rhythm by mediating phosphorylation of CRY1, leading to destabilize it. May regulate the Wnt signaling pathway by phosphorylating CTNNB1, leading to stabilize it. Also acts as a regulator of cellular polarity by remodeling the actin cytoskeleton; probably by indirectly activating myosin. Also phosphorylates CFTR, EEF2K, KLC1, NOS3 and SLC12A1. Plays an important role in the differential regulation of pro-autophagy (composed of PIK3C3, BECN1, PIK3R4 and UVRAG or ATG14) and non-autophagy (composed of PIK3C3, BECN1 and PIK3R4) complexes, in response to glucose starvation. Can inhibit the non-autophagy complex by phosphorylating PIK3C3 and can activate the pro-autophagy complex by phosphorylating BECN1. Upon glucose starvation, promotes ARF6 activation in a kinase-independent manner leading to cell migration. Upon glucose deprivation mediates the phosphorylation of ACSS2 at 'Ser-659', which exposes the nuclear localization signal of ACSS2, required for its interaction with KPNA1 and nuclear translocation. Upon stress, regulates mitochondrial fragmentation through phosphorylation of MTFR1L. The chain is 5'-AMP-activated protein kinase catalytic subunit alpha-2 (PRKAA2) from Sus scrofa (Pig).